We begin with the raw amino-acid sequence, 983 residues long: Anion exchange protein 4 (983 aa).

The segment at 1-48 (MEMKLPGQEGFEASSAPRNIPSGELDSNPDPGTGPSPDGPSDTESKEL) is disordered. Asn183 carries N-linked (GlcNAc...) asparagine glycosylation. 2 disordered regions span residues 186–205 (TGTR…DNEE) and 332–357 (RIPP…RGPA). 4 helical membrane-spanning segments follow: residues 415–435 (AVLY…GLLG), 443–463 (GVLE…LMAG), 500–520 (VGIW…SVLV), and 530–550 (GFCA…MLNL). Residues 415 to 983 (AVLYIYLATV…KAPEINISVN (569 aa)) form a membrane (anion exchange) region. Asn576 and Asn600 each carry an N-linked (GlcNAc...) asparagine glycan. The next 7 helical transmembrane spans lie at 624 to 644 (VPDI…FAMA), 665 to 685 (FSSV…GLAT), 712 to 732 (PWWW…LIFM), 758 to 778 (LFCV…WYVS), 815 to 835 (GLVV…LKFI), 837 to 857 (MPVL…SIQF), and 899 to 919 (LWII…LGLV). The span at 946-957 (RSIPEKGLEPEH) shows a compositional bias: basic and acidic residues. Positions 946-983 (RSIPEKGLEPEHSFSGSDSEDSELMYQPKAPEINISVN) are disordered. Asn979 carries N-linked (GlcNAc...) asparagine glycosylation.

The protein belongs to the anion exchanger (TC 2.A.31) family. Kidney specific.

Its subcellular location is the basolateral cell membrane. The enzyme catalyses 2 hydrogencarbonate(out) + chloride(in) + Na(+)(out) = 2 hydrogencarbonate(in) + chloride(out) + Na(+)(in). The catalysed reaction is K(+)(in) + 2 hydrogencarbonate(in) + chloride(out) = K(+)(out) + 2 hydrogencarbonate(out) + chloride(in). It carries out the reaction Li(+)(in) + 2 hydrogencarbonate(in) + chloride(out) = Li(+)(out) + 2 hydrogencarbonate(out) + chloride(in). It catalyses the reaction Rb(+)(in) + 2 hydrogencarbonate(in) + chloride(out) = Rb(+)(out) + 2 hydrogencarbonate(out) + chloride(in). The enzyme catalyses Cs(+)(in) + 2 hydrogencarbonate(in) + chloride(out) = Cs(+)(out) + 2 hydrogencarbonate(out) + chloride(in). Electroneutral Cl(-)/HCO3(-) antiporter that favors chloride ion entry and efflux of hydrogencarbonate and sodium ion across the basolateral membrane and may participate in salivary secretion. Also mediates Cl(-)/HCO3(-) exchange activity in the presence of K(+) as well as Cs(+), Li(+), and Rb(+). Does not contribute to Cl(-)/HCO3(-) exchanger in the apical membrane of the upper villous epithelium. This chain is Anion exchange protein 4, found in Homo sapiens (Human).